The following is a 525-amino-acid chain: GMP synthase [glutamine-hydrolyzing] (525 aa).

The 199-residue stretch at 9 to 207 folds into the Glutamine amidotransferase type-1 domain; that stretch reads RILILDFGSQ…VMDICKCEKL (199 aa). Cys-86 (nucleophile) is an active-site residue. Active-site residues include His-181 and Glu-183. In terms of domain architecture, GMPS ATP-PPase spans 208–400; that stretch reads WTAGAIIEDA…LGLPYDMLYR (193 aa). Position 235 to 241 (235 to 241) interacts with ATP; sequence SGGVDSS.

Homodimer.

The enzyme catalyses XMP + L-glutamine + ATP + H2O = GMP + L-glutamate + AMP + diphosphate + 2 H(+). It functions in the pathway purine metabolism; GMP biosynthesis; GMP from XMP (L-Gln route): step 1/1. Catalyzes the synthesis of GMP from XMP. The protein is GMP synthase [glutamine-hydrolyzing] of Alteromonas mediterranea (strain DSM 17117 / CIP 110805 / LMG 28347 / Deep ecotype).